The primary structure comprises 341 residues: S-adenosylmethionine:tRNA ribosyltransferase-isomerase (341 aa).

This sequence belongs to the QueA family. In terms of assembly, monomer.

It is found in the cytoplasm. It carries out the reaction 7-aminomethyl-7-carbaguanosine(34) in tRNA + S-adenosyl-L-methionine = epoxyqueuosine(34) in tRNA + adenine + L-methionine + 2 H(+). Its pathway is tRNA modification; tRNA-queuosine biosynthesis. Transfers and isomerizes the ribose moiety from AdoMet to the 7-aminomethyl group of 7-deazaguanine (preQ1-tRNA) to give epoxyqueuosine (oQ-tRNA). The chain is S-adenosylmethionine:tRNA ribosyltransferase-isomerase from Clostridium kluyveri (strain NBRC 12016).